The primary structure comprises 748 residues: ATP-dependent rRNA helicase SPB4 (748 aa).

A Q motif motif is present at residues 15–43 (WAKLNPPLSPWILDVINSMGFKNMTPVQA). The region spanning 46 to 260 (IPRAVKNQDC…GLGLRNPVRI (215 aa)) is the Helicase ATP-binding domain. An ATP-binding site is contributed by 59–66 (AVTGSGKT). A disordered region spans residues 119-156 (ESEEETGDVEAHAPPFASSSRSPSPQTPDKPLFPLPML). Residues 132 to 142 (PPFASSSRSPS) are compositionally biased toward low complexity. Residues 143–152 (PQTPDKPLFP) show a composition bias toward pro residues. Positions 207 to 210 (DEAD) match the DEAD box motif. Positions 295–460 (KTLQLIRLLL…KAQRSILDFL (166 aa)) constitute a Helicase C-terminal domain. A disordered region spans residues 614 to 748 (AQRADNQSSN…IGGGMFDDLE (135 aa)). Composition is skewed to basic and acidic residues over residues 626–669 (ARAE…KYEW) and 708–730 (EIGK…KESS). A compositionally biased stretch (gly residues) spans 732-748 (GGAGGGGIGGGMFDDLE).

It belongs to the DEAD box helicase family. DDX55/SPB4 subfamily. Component of pre-60S ribosomal complexes.

It localises to the nucleus. It is found in the nucleolus. It catalyses the reaction ATP + H2O = ADP + phosphate + H(+). Functionally, ATP-binding RNA helicase involved in the biogenesis of 60S ribosomal subunits. Binds 90S pre-ribosomal particles and dissociates from pre-60S ribosomal particles after processing of 27SB pre-rRNA. Required for the normal formation of 18S rRNA through the processing of pre-rRNAs at sites A0, A1 and A2, and the normal formation of 25S and 5.8S rRNAs through the processing of pre-rRNAs at sites C1 and C2. The protein is ATP-dependent rRNA helicase SPB4 of Cryptococcus neoformans var. neoformans serotype D (strain B-3501A) (Filobasidiella neoformans).